Reading from the N-terminus, the 238-residue chain is uncharacterized protein (238 aa).

Over residues methionine 1–arginine 10 the composition is skewed to basic residues. Disordered regions lie at residues methionine 1 to histidine 26 and leucine 195 to phenylalanine 238.

The protein belongs to the asfivirus DP238L family.

This is an uncharacterized protein from Ornithodoros (relapsing fever ticks).